An 863-amino-acid chain; its full sequence is Glycerol-3-phosphate acyltransferase (863 aa).

Residues 1–29 are disordered; sequence MPKKNSPLLPKETTTTQSSVDTSGSSNLT. Over residues 12-29 the composition is skewed to polar residues; that stretch reads ETTTTQSSVDTSGSSNLT. The HXXXXD motif motif lies at 343–348; sequence SHRSHM.

Belongs to the GPAT/DAPAT family.

The protein localises to the cell inner membrane. It carries out the reaction sn-glycerol 3-phosphate + an acyl-CoA = a 1-acyl-sn-glycero-3-phosphate + CoA. The protein operates within phospholipid metabolism; CDP-diacylglycerol biosynthesis; CDP-diacylglycerol from sn-glycerol 3-phosphate: step 1/3. The polypeptide is Glycerol-3-phosphate acyltransferase (Xylella fastidiosa (strain M23)).